The following is a 244-amino-acid chain: Neurogenin-1 (244 aa).

Disordered regions lie at residues 1–27 (MPAPLETCISDLDCSSSNSSSDLSSFL) and 39–82 (LAST…ARVR). A compositionally biased stretch (low complexity) spans 10–27 (SDLDCSSSNSSSDLSSFL). The bHLH domain occupies 93–145 (SRRVKANDRERNRMHNLNAALDALRSVLPSFPDDTKLTKIETLRFAYNYIWAL).

In terms of assembly, efficient DNA binding requires dimerization with another bHLH protein. Expression restricted to the embryonic nervous system.

The protein resides in the nucleus. Acts as a transcriptional regulator. Involved in the initiation of neuronal differentiation. Activates transcription by binding to the E box (5'-CANNTG-3'). Associates with chromatin to enhancer regulatory elements in genes encoding key transcriptional regulators of neurogenesis. In Mus musculus (Mouse), this protein is Neurogenin-1 (Neurog1).